The primary structure comprises 435 residues: D-amino acid dehydrogenase (435 aa).

Val-3–Trp-17 lines the FAD pocket.

Belongs to the DadA oxidoreductase family. FAD serves as cofactor.

The catalysed reaction is a D-alpha-amino acid + A + H2O = a 2-oxocarboxylate + AH2 + NH4(+). The protein operates within amino-acid degradation; D-alanine degradation; NH(3) and pyruvate from D-alanine: step 1/1. In terms of biological role, oxidative deamination of D-amino acids. The chain is D-amino acid dehydrogenase from Xylella fastidiosa (strain M23).